Reading from the N-terminus, the 405-residue chain is Tryptophan synthase beta chain (405 aa).

The residue at position 96 (Lys-96) is an N6-(pyridoxal phosphate)lysine.

It belongs to the TrpB family. Tetramer of two alpha and two beta chains. Pyridoxal 5'-phosphate serves as cofactor.

The enzyme catalyses (1S,2R)-1-C-(indol-3-yl)glycerol 3-phosphate + L-serine = D-glyceraldehyde 3-phosphate + L-tryptophan + H2O. The protein operates within amino-acid biosynthesis; L-tryptophan biosynthesis; L-tryptophan from chorismate: step 5/5. In terms of biological role, the beta subunit is responsible for the synthesis of L-tryptophan from indole and L-serine. In Clostridium botulinum (strain Eklund 17B / Type B), this protein is Tryptophan synthase beta chain.